The primary structure comprises 353 residues: Cyclin-dependent kinase-like 1 (353 aa).

Positions 4 to 286 (YDRLSKLGEG…CSELMLHGIF (283 aa)) constitute a Protein kinase domain. ATP is bound by residues 10 to 18 (LGEGSYGVV) and lysine 33. Aspartate 126 functions as the Proton acceptor in the catalytic mechanism. The interval 331–353 (GGNHGNNNNNGNGINRNFLPTIS) is disordered. Residues 335–347 (GNNNNNGNGINRN) are compositionally biased toward low complexity.

The protein belongs to the protein kinase superfamily. Ser/Thr protein kinase family. As to expression, specifically expressed in head and tail ciliated sensory neurons.

It is found in the cell projection. The protein resides in the cilium. It carries out the reaction L-seryl-[protein] + ATP = O-phospho-L-seryl-[protein] + ADP + H(+). The catalysed reaction is L-threonyl-[protein] + ATP = O-phospho-L-threonyl-[protein] + ADP + H(+). Modulates cilium assembly. This chain is Cyclin-dependent kinase-like 1, found in Caenorhabditis elegans.